The chain runs to 324 residues: Acetyl-coenzyme A carboxylase carboxyl transferase subunit alpha (324 aa).

A CoA carboxyltransferase C-terminal domain is found at 37 to 291 (KLEKRLDKLK…REFIIQEWLR (255 aa)).

The protein belongs to the AccA family. In terms of assembly, acetyl-CoA carboxylase is a heterohexamer composed of biotin carboxyl carrier protein (AccB), biotin carboxylase (AccC) and two subunits each of ACCase subunit alpha (AccA) and ACCase subunit beta (AccD).

The protein resides in the cytoplasm. The enzyme catalyses N(6)-carboxybiotinyl-L-lysyl-[protein] + acetyl-CoA = N(6)-biotinyl-L-lysyl-[protein] + malonyl-CoA. It participates in lipid metabolism; malonyl-CoA biosynthesis; malonyl-CoA from acetyl-CoA: step 1/1. Component of the acetyl coenzyme A carboxylase (ACC) complex. First, biotin carboxylase catalyzes the carboxylation of biotin on its carrier protein (BCCP) and then the CO(2) group is transferred by the carboxyltransferase to acetyl-CoA to form malonyl-CoA. The sequence is that of Acetyl-coenzyme A carboxylase carboxyl transferase subunit alpha from Chlamydia pneumoniae (Chlamydophila pneumoniae).